A 203-amino-acid polypeptide reads, in one-letter code: Superoxide dismutase [Mn/Fe] (203 aa).

The Fe(3+) site is built by His-27, His-81, Asp-163, and His-167. His-27, His-81, Asp-163, and His-167 together coordinate Mn(2+).

This sequence belongs to the iron/manganese superoxide dismutase family. It depends on Mn(2+) as a cofactor. Fe(3+) is required as a cofactor.

It catalyses the reaction 2 superoxide + 2 H(+) = H2O2 + O2. Destroys superoxide anion radicals which are normally produced within the cells and which are toxic to biological systems. Catalyzes the dismutation of superoxide anion radicals into O2 and H2O2 by successive reduction and oxidation of the transition metal ion at the active site. The sequence is that of Superoxide dismutase [Mn/Fe] (sodA) from Streptococcus mutans serotype c (strain ATCC 700610 / UA159).